We begin with the raw amino-acid sequence, 137 residues long: Large ribosomal subunit protein uL16 (137 aa).

The protein belongs to the universal ribosomal protein uL16 family. Part of the 50S ribosomal subunit.

Binds 23S rRNA and is also seen to make contacts with the A and possibly P site tRNAs. This is Large ribosomal subunit protein uL16 from Marinomonas sp. (strain MWYL1).